The sequence spans 215 residues: Cytochrome b6 (215 aa).

Residues 32–52 (IFYCLGGITLTCFLVQVATGF) traverse the membrane as a helical segment. Residue cysteine 35 participates in heme c binding. Histidine 86 and histidine 100 together coordinate heme b. The next 3 helical transmembrane spans lie at 90–110 (ASMMVLMMILHVFRVYLTGGF), 116–136 (LTWVTGVILSVITVSFGVTGY), and 186–206 (LHTFVLPLLAAVFMLMHFLMI). Residues histidine 187 and histidine 202 each contribute to the heme b site.

Belongs to the cytochrome b family. PetB subfamily. In terms of assembly, the 4 large subunits of the cytochrome b6-f complex are cytochrome b6, subunit IV (17 kDa polypeptide, PetD), cytochrome f and the Rieske protein, while the 4 small subunits are PetG, PetL, PetM and PetN. The complex functions as a dimer. It depends on heme b as a cofactor. Heme c is required as a cofactor.

The protein localises to the plastid. Its subcellular location is the chloroplast thylakoid membrane. Functionally, component of the cytochrome b6-f complex, which mediates electron transfer between photosystem II (PSII) and photosystem I (PSI), cyclic electron flow around PSI, and state transitions. The chain is Cytochrome b6 from Ostreococcus tauri.